The following is a 216-amino-acid chain: Transmembrane protein 186 (216 aa).

The Mitochondrial matrix portion of the chain corresponds to 1–68 (MAFLLRVVPR…IYRFRAIRAI (68 aa)). A disordered region spans residues 31–52 (GDSKRWVGSRSPHSREKSPGTE). The helical transmembrane segment at 69–91 (GFLSRLKLAQTAVTVVALPPGFY) threads the bilayer. The Mitochondrial intermembrane portion of the chain corresponds to 92-103 (CYSQGLMTLSSL). A helical transmembrane segment spans residues 104–124 (CLLGGVASFALAMLCWMSHFF). The Mitochondrial matrix segment spans residues 125-216 (RRLVGILYVN…GTLATLKNSK (92 aa)).

This sequence belongs to the TMEM186 family. Part of the mitochondrial complex I assembly/MCIA complex that comprises at least the core subunits TMEM126B, NDUFAF1, ECSIT and ACAD9 and complement subunits such as COA1 and TMEM186. Interacts with MT-ND3.

The protein localises to the mitochondrion inner membrane. In terms of biological role, as part of the MCIA complex, required for efficient assembly of the mitochondrial complex I. The protein is Transmembrane protein 186 of Mus musculus (Mouse).